The sequence spans 77 residues: Conotoxin ArMSGL-0141 (77 aa).

The N-terminal stretch at 1-18 (MSGLGILVLTLLLLVYMA) is a signal peptide. Positions 19 to 44 (TSHQDAGEKQATQRDAINVRRRRSLT) are excised as a propeptide. Disulfide bonds link cysteine 51–cysteine 63, cysteine 55–cysteine 71, and cysteine 62–cysteine 75. At phenylalanine 76 the chain carries Phenylalanine amide.

This sequence belongs to the conotoxin O3 superfamily. In terms of tissue distribution, expressed by the venom duct.

The protein localises to the secreted. The sequence is that of Conotoxin ArMSGL-0141 from Conus arenatus (Sand-dusted cone).